Here is a 468-residue protein sequence, read N- to C-terminus: Glycosyl hydrolase family 109 protein (468 aa).

Residues 1 to 19 form the signal peptide; it reads MVYKVFLSLCIGLALSASA. Residues 67-68, Asp-89, 138-141, 158-159, and Asn-187 each bind NAD(+); these read MR, WKTH, and EV. Substrate is bound by residues Tyr-216, Arg-232, 244 to 247, and Tyr-322; that span reads YATH. Tyr-244 lines the NAD(+) pocket.

It belongs to the Gfo/Idh/MocA family. Glycosyl hydrolase 109 subfamily. The cofactor is NAD(+).

Its function is as follows. Glycosidase. In Porphyromonas gingivalis (strain ATCC BAA-308 / W83), this protein is Glycosyl hydrolase family 109 protein.